The sequence spans 116 residues: Ribosome-binding factor A (116 aa).

This sequence belongs to the RbfA family. Monomer. Binds 30S ribosomal subunits, but not 50S ribosomal subunits or 70S ribosomes.

The protein localises to the cytoplasm. Its function is as follows. One of several proteins that assist in the late maturation steps of the functional core of the 30S ribosomal subunit. Associates with free 30S ribosomal subunits (but not with 30S subunits that are part of 70S ribosomes or polysomes). Required for efficient processing of 16S rRNA. May interact with the 5'-terminal helix region of 16S rRNA. In Staphylococcus aureus (strain JH9), this protein is Ribosome-binding factor A.